The chain runs to 82 residues: Colonization factor (82 aa).

The N-terminal stretch at Met-1–Ala-33 is a signal peptide.

The protein localises to the secreted. This chain is Colonization factor (cep), found in Vibrio cholerae serotype O1 (strain ATCC 39315 / El Tor Inaba N16961).